The chain runs to 295 residues: Bis(5'-nucleosyl)-tetraphosphatase, symmetrical (295 aa).

The interval 271–295 (LSIEHPRHTHTPRRKAKKRHKRSPK) is disordered. A compositionally biased stretch (basic residues) spans 277 to 295 (RHTHTPRRKAKKRHKRSPK).

Belongs to the Ap4A hydrolase family.

The catalysed reaction is P(1),P(4)-bis(5'-adenosyl) tetraphosphate + H2O = 2 ADP + 2 H(+). Hydrolyzes diadenosine 5',5'''-P1,P4-tetraphosphate to yield ADP. This chain is Bis(5'-nucleosyl)-tetraphosphatase, symmetrical, found in Xylella fastidiosa (strain M23).